Reading from the N-terminus, the 507-residue chain is Transcription factor CP2 (507 aa).

The Grh/CP2 DB domain maps to 61–300 (ENKILPFQYV…SPGFNSSHNS (240 aa)). The segment at 133 to 395 (EHQQLEGWRW…LFNALKGRMV (263 aa)) is DNA-binding. Disordered regions lie at residues 240-268 (PKGA…YQPS) and 296-316 (SSHN…QPEP). A compositionally biased stretch (basic and acidic residues) spans 241-265 (KGADRKQKTDREKMEKRTPQEKEKY).

This sequence belongs to the grh/CP2 family. CP2 subfamily. In terms of assembly, component of the SSP (stage selector protein) complex, which appears to be a heteromer of TFCP2 and 2 copies of NFE4.

The protein resides in the nucleus. In terms of biological role, may function as a transcription factor. This Xenopus tropicalis (Western clawed frog) protein is Transcription factor CP2 (tfcp2).